We begin with the raw amino-acid sequence, 986 residues long: Mediator of RNA polymerase II transcription subunit 24 (986 aa).

6 consecutive short sequence motifs (LXXLL motif) follow at residues 128–132 (LNWLL), 341–345 (LTPLL), 445–449 (LDLLL), 554–558 (LVALL), 785–789 (LPNLL), and 855–859 (LMRLL).

The protein belongs to the Mediator complex subunit 24 family. In terms of assembly, component of the Mediator complex.

The protein resides in the nucleus. Its function is as follows. Component of the Mediator complex, a coactivator involved in the regulated transcription of nearly all RNA polymerase II-dependent genes. Mediator functions as a bridge to convey information from gene-specific regulatory proteins to the basal RNA polymerase II transcription machinery. Mediator is recruited to promoters by direct interactions with regulatory proteins and serves as a scaffold for the assembly of a functional preinitiation complex with RNA polymerase II and the general transcription factors. The chain is Mediator of RNA polymerase II transcription subunit 24 (MED24) from Gallus gallus (Chicken).